The following is a 430-amino-acid chain: Adenylosuccinate synthetase (430 aa).

GTP contacts are provided by residues 13–19 and 41–43; these read GDEGKGK and GHT. The active-site Proton acceptor is the Asp-14. Residues Asp-14 and Gly-41 each coordinate Mg(2+). Residues 14-17, 39-42, Thr-130, Arg-144, Gln-225, Thr-240, and Arg-304 each bind IMP; these read DEGK and NAGH. Catalysis depends on His-42, which acts as the Proton donor. 300–306 contributes to the substrate binding site; that stretch reads ASTGRPR. Residues Arg-306, 332–334, and 414–416 contribute to the GTP site; these read KLD and STG.

The protein belongs to the adenylosuccinate synthetase family. As to quaternary structure, homodimer. Mg(2+) serves as cofactor.

Its subcellular location is the cytoplasm. It catalyses the reaction IMP + L-aspartate + GTP = N(6)-(1,2-dicarboxyethyl)-AMP + GDP + phosphate + 2 H(+). It functions in the pathway purine metabolism; AMP biosynthesis via de novo pathway; AMP from IMP: step 1/2. Plays an important role in the de novo pathway of purine nucleotide biosynthesis. Catalyzes the first committed step in the biosynthesis of AMP from IMP. This chain is Adenylosuccinate synthetase, found in Xanthomonas oryzae pv. oryzae (strain MAFF 311018).